The sequence spans 431 residues: MGKNVVVLGTQWGDEGKGKIVDLLTEQAKYVVRYQGGHNAGHTLVINGDKTVLHLIPSGILRDNVKCIIGNGVVVAPDALLKEINMLKERGVPVEERLLISEACPLILPFHCALDIAREKARGNKAIGTTGRGIGPAYEDKVSRRGLRIGDLFNAELFATKLAEVMKYHNFMLTEYYKVEAVDYQKTLDDALAIADYLKSMCTDVTELLDTARKAGEPIMFEGAQGTLLDIDHGTYPFVTSSNTTAGGVATGSGFGPRHLDYVLGIMKAYTTRVGAGPFPTELSCEIGDYIGHKGQEFGATTGRKRRPGWLDAVAMRRAVQINSVSGFCLTKLDVLDGLEEVKICVGYQYPDGTVETVTPLAAEGYEEVTPVYETMPGWSDITFGATSIEQLPAAAIAYIKRIEELLETPIDIISTGPDRNETMILVNPFN.

GTP-binding positions include 13-19 (GDEGKGK) and 41-43 (GHT). Aspartate 14 serves as the catalytic Proton acceptor. Residues aspartate 14 and glycine 41 each contribute to the Mg(2+) site. IMP is bound by residues 14–17 (DEGK), 39–42 (NAGH), threonine 130, arginine 144, glutamine 225, threonine 240, and arginine 304. The active-site Proton donor is histidine 42. Residue 300–306 (ATTGRKR) participates in substrate binding. GTP-binding positions include arginine 306, 332-334 (KLD), and 415-417 (STG).

It belongs to the adenylosuccinate synthetase family. Homodimer. Mg(2+) serves as cofactor.

The protein localises to the cytoplasm. It catalyses the reaction IMP + L-aspartate + GTP = N(6)-(1,2-dicarboxyethyl)-AMP + GDP + phosphate + 2 H(+). It functions in the pathway purine metabolism; AMP biosynthesis via de novo pathway; AMP from IMP: step 1/2. Its function is as follows. Plays an important role in the de novo pathway of purine nucleotide biosynthesis. Catalyzes the first committed step in the biosynthesis of AMP from IMP. The sequence is that of Adenylosuccinate synthetase from Shewanella denitrificans (strain OS217 / ATCC BAA-1090 / DSM 15013).